The chain runs to 274 residues: Serine/threonine-protein kinase 1 (274 aa).

Residues 16–273 (AVLAPKVVNG…HSFLASRHDY (258 aa)) form the Protein kinase domain. ATP is bound by residues 22–30 (VVNGRFGKM) and Lys46. The active-site Proton acceptor is the Asp134.

The protein belongs to the protein kinase superfamily. Ser/Thr protein kinase family.

It catalyses the reaction L-seryl-[protein] + ATP = O-phospho-L-seryl-[protein] + ADP + H(+). The catalysed reaction is L-threonyl-[protein] + ATP = O-phospho-L-threonyl-[protein] + ADP + H(+). The sequence is that of Serine/threonine-protein kinase 1 (PK1) from Orgyia pseudotsugata multicapsid polyhedrosis virus (OpMNPV).